Reading from the N-terminus, the 906-residue chain is Coatomer subunit beta' (906 aa).

WD repeat units follow at residues 13-52, 55-94, 97-136, 140-180, 183-224, 227-266, 350-388, and 390-425; these read ARSDRVKSVDLHPTEPWMLASLYNGSVCVWNHETQTLVKT, VCDLPVRAAKFVARKNWVVTGADDMQIRVFNYNTLERVHM, AHSDYIRCIAVHPTQPFILTSSDDMLIKLWDWDKKWSCSQ, GHTH…PNFT, GHEK…CVQT, GHAQNVSCASFHPELPIIITGSEDGTVRIWHSSTYRLEST, SCEIYPQTIQHNPNGRFVVVCGDGEYIIYTAMALRNKSF, and SAQEFAWAHDSSEYAIRESNSVVKIFKNFKEKKSFK. At Lys-627 the chain carries N6-acetyllysine. A WD 9 repeat occupies 746 to 783; that stretch reads IRTGRLPEAAFLARTYLPSQVSRVVKLWRENLSKVNQK. A disordered region spans residues 837-872; that stretch reads EEAKGFQPSRSAAQQELDGKPASPTPVIVTSQTANK. Ser-859 carries the post-translational modification Phosphoserine. Thr-861 is subject to Phosphothreonine. Residues 866–891 adopt a coiled-coil conformation; that stretch reads TSQTANKEEKSLLELEVDLDNLEIED.

Belongs to the WD repeat COPB2 family. Oligomeric complex that consists of at least the alpha, beta, beta', gamma, delta, epsilon and zeta subunits. Probably interacts with PEX11A. Interacts with SCYL1. Interacts with JAGN1.

The protein resides in the cytoplasm. Its subcellular location is the cytosol. It localises to the golgi apparatus membrane. It is found in the cytoplasmic vesicle. The protein localises to the COPI-coated vesicle membrane. In terms of biological role, the coatomer is a cytosolic protein complex that binds to dilysine motifs and reversibly associates with Golgi non-clathrin-coated vesicles, which further mediate biosynthetic protein transport from the ER, via the Golgi up to the trans Golgi network. Coatomer complex is required for budding from Golgi membranes, and is essential for the retrograde Golgi-to-ER transport of dilysine-tagged proteins. In mammals, the coatomer can only be recruited by membranes associated to ADP-ribosylation factors (ARFs), which are small GTP-binding proteins; the complex also influences the Golgi structural integrity, as well as the processing, activity, and endocytic recycling of LDL receptors. Functionally, this coatomer complex protein, essential for Golgi budding and vesicular trafficking, is a selective binding protein (RACK) for protein kinase C, epsilon type. It binds to Golgi membranes in a GTP-dependent manner. The protein is Coatomer subunit beta' (COPB2) of Bos taurus (Bovine).